Consider the following 383-residue polypeptide: 3-dehydroquinate synthase (383 aa).

NAD(+) contacts are provided by residues 81–86, 115–119, 139–140, lysine 152, and lysine 161; these read EGEVSK, GVVGD, and TS. Zn(2+)-binding residues include glutamate 194, histidine 256, and histidine 274.

It belongs to the sugar phosphate cyclases superfamily. Dehydroquinate synthase family. Requires Co(2+) as cofactor. Zn(2+) is required as a cofactor. It depends on NAD(+) as a cofactor.

The protein localises to the cytoplasm. It carries out the reaction 7-phospho-2-dehydro-3-deoxy-D-arabino-heptonate = 3-dehydroquinate + phosphate. It participates in metabolic intermediate biosynthesis; chorismate biosynthesis; chorismate from D-erythrose 4-phosphate and phosphoenolpyruvate: step 2/7. Catalyzes the conversion of 3-deoxy-D-arabino-heptulosonate 7-phosphate (DAHP) to dehydroquinate (DHQ). The protein is 3-dehydroquinate synthase of Nitrobacter winogradskyi (strain ATCC 25391 / DSM 10237 / CIP 104748 / NCIMB 11846 / Nb-255).